The sequence spans 219 residues: Ribose-5-phosphate isomerase A (219 aa).

Substrate contacts are provided by residues 28 to 31, 81 to 84, and 94 to 97; these read TGST, DGAD, and KGGG. The active-site Proton acceptor is E103. K121 is a binding site for substrate.

This sequence belongs to the ribose 5-phosphate isomerase family. As to quaternary structure, homodimer.

It catalyses the reaction aldehydo-D-ribose 5-phosphate = D-ribulose 5-phosphate. It functions in the pathway carbohydrate degradation; pentose phosphate pathway; D-ribose 5-phosphate from D-ribulose 5-phosphate (non-oxidative stage): step 1/1. In terms of biological role, catalyzes the reversible conversion of ribose-5-phosphate to ribulose 5-phosphate. The polypeptide is Ribose-5-phosphate isomerase A (Pectobacterium atrosepticum (strain SCRI 1043 / ATCC BAA-672) (Erwinia carotovora subsp. atroseptica)).